A 51-amino-acid polypeptide reads, in one-letter code: Insulin (51 aa).

Disulfide bonds link C7–C36, C19–C49, and C35–C40.

It belongs to the insulin family. In terms of assembly, heterodimer of a B chain and an A chain linked by two disulfide bonds.

The protein resides in the secreted. Insulin decreases blood glucose concentration. It increases cell permeability to monosaccharides, amino acids and fatty acids. It accelerates glycolysis, the pentose phosphate cycle, and glycogen synthesis in liver. The chain is Insulin (INS) from Myocastor coypus (Coypu).